The chain runs to 356 residues: Mitogen-activated protein kinase PMK11 (356 aa).

The 289-residue stretch at 24 to 312 (YDIQDVVGEG…VEEALKHPYL (289 aa)) folds into the Protein kinase domain. ATP is bound by residues 30–38 (VGEGAYGVV) and lysine 53.

It belongs to the protein kinase superfamily. CMGC Ser/Thr protein kinase family. MAP kinase subfamily. Requires Mg(2+) as cofactor. In terms of processing, phosphorylated by MST7.

It carries out the reaction L-seryl-[protein] + ATP = O-phospho-L-seryl-[protein] + ADP + H(+). It catalyses the reaction L-threonyl-[protein] + ATP = O-phospho-L-threonyl-[protein] + ADP + H(+). Functionally, mitogen-activated protein kinase; part of the MST11-MST7-PMK1 MAP kinase (MAPK) cascade that is essential for appressorium formation, penetration and invasive growth. Central regulator of appressorium development that acts downstream of the cAMP signal. The MST11-MST7-PMK1 MAP kinase cascade transduces signals from the cell surface sensors MDB2 and SHO1 that recognize various surface signals such as surface hydrophobicity, cutin monomers, and rice leaf waxes. Regulates expression of secreted fungal effector proteins implicated of host immune defenses, preventing reactive oxygen species generation and excessive callose deposition at plasmodesmata. Furthermore, controls the hyphal constriction required for fungal growth from one rice cell to the neighboring cell, enabling host tissue colonization and blast disease. Targets downstream of the PMK1-MAPK pathway include transcription factor MST12 and pathogenicity-related genes GAS1 and GAS2, both of which are expressed during appressorium formation, even if regulation of MST12 is not associated with expression of GAS1 or GAS2. The polypeptide is Mitogen-activated protein kinase PMK11 (Pyricularia oryzae (strain 70-15 / ATCC MYA-4617 / FGSC 8958) (Rice blast fungus)).